A 557-amino-acid polypeptide reads, in one-letter code: Formate--tetrahydrofolate ligase (557 aa).

65–72 serves as a coordination point for ATP; the sequence is TPAGEGKT.

This sequence belongs to the formate--tetrahydrofolate ligase family.

It catalyses the reaction (6S)-5,6,7,8-tetrahydrofolate + formate + ATP = (6R)-10-formyltetrahydrofolate + ADP + phosphate. The protein operates within one-carbon metabolism; tetrahydrofolate interconversion. This is Formate--tetrahydrofolate ligase from Methylobacterium radiotolerans (strain ATCC 27329 / DSM 1819 / JCM 2831 / NBRC 15690 / NCIMB 10815 / 0-1).